We begin with the raw amino-acid sequence, 349 residues long: Phosphoribosylformylglycinamidine cyclo-ligase (349 aa).

This sequence belongs to the AIR synthase family.

It localises to the cytoplasm. It catalyses the reaction 2-formamido-N(1)-(5-O-phospho-beta-D-ribosyl)acetamidine + ATP = 5-amino-1-(5-phospho-beta-D-ribosyl)imidazole + ADP + phosphate + H(+). Its pathway is purine metabolism; IMP biosynthesis via de novo pathway; 5-amino-1-(5-phospho-D-ribosyl)imidazole from N(2)-formyl-N(1)-(5-phospho-D-ribosyl)glycinamide: step 2/2. This Bordetella pertussis (strain Tohama I / ATCC BAA-589 / NCTC 13251) protein is Phosphoribosylformylglycinamidine cyclo-ligase.